We begin with the raw amino-acid sequence, 394 residues long: Phosphoglycerate kinase (394 aa).

Substrate contacts are provided by residues 21–23, Arg36, 59–62, Arg118, and Arg151; these read DFN and HLGR. Ser183 bears the Phosphoserine mark. Lys201 lines the ATP pocket. Thr299 bears the Phosphothreonine mark. Residues Glu323 and 350-353 contribute to the ATP site; that span reads GGDS.

The protein belongs to the phosphoglycerate kinase family. As to quaternary structure, monomer.

The protein resides in the cytoplasm. It carries out the reaction (2R)-3-phosphoglycerate + ATP = (2R)-3-phospho-glyceroyl phosphate + ADP. It functions in the pathway carbohydrate degradation; glycolysis; pyruvate from D-glyceraldehyde 3-phosphate: step 2/5. The chain is Phosphoglycerate kinase from Halalkalibacterium halodurans (strain ATCC BAA-125 / DSM 18197 / FERM 7344 / JCM 9153 / C-125) (Bacillus halodurans).